The chain runs to 219 residues: Deoxyribose-phosphate aldolase (219 aa).

Residue aspartate 92 is the Proton donor/acceptor of the active site. Lysine 154 acts as the Schiff-base intermediate with acetaldehyde in catalysis. Catalysis depends on lysine 183, which acts as the Proton donor/acceptor.

The protein belongs to the DeoC/FbaB aldolase family. DeoC type 1 subfamily.

It is found in the cytoplasm. It carries out the reaction 2-deoxy-D-ribose 5-phosphate = D-glyceraldehyde 3-phosphate + acetaldehyde. Its pathway is carbohydrate degradation; 2-deoxy-D-ribose 1-phosphate degradation; D-glyceraldehyde 3-phosphate and acetaldehyde from 2-deoxy-alpha-D-ribose 1-phosphate: step 2/2. Catalyzes a reversible aldol reaction between acetaldehyde and D-glyceraldehyde 3-phosphate to generate 2-deoxy-D-ribose 5-phosphate. This chain is Deoxyribose-phosphate aldolase, found in Dictyoglomus turgidum (strain DSM 6724 / Z-1310).